A 256-amino-acid polypeptide reads, in one-letter code: Membrane-anchored junction protein (256 aa).

Residues 1-232 (MSLKPFTYPF…HSSPPPPKEP (232 aa)) lie on the Nuclear side of the membrane. Disordered regions lie at residues 143 to 197 (KRKL…TPAS) and 211 to 235 (HGLQ…PGAR). Polar residues predominate over residues 164–173 (ETSSEASSNK). Basic and acidic residues predominate over residues 175 to 184 (PLKESKRSTD). The helical transmembrane segment at 233 to 251 (GARGFLGFLSALFPFRYFF) threads the bilayer. Over 252–256 (KKSGQ) the chain is Perinuclear space.

The protein belongs to the MAJIN family. As to quaternary structure, component of the MAJIN-TERB1-TERB2 complex, composed of MAJIN, TERB1 and TERB2. In terms of tissue distribution, specifically expressed in germline tissues.

It is found in the nucleus inner membrane. The protein resides in the chromosome. It localises to the telomere. Its function is as follows. Meiosis-specific telomere-associated protein involved in meiotic telomere attachment to the nucleus inner membrane, a crucial step for homologous pairing and synapsis. Component of the MAJIN-TERB1-TERB2 complex, which promotes telomere cap exchange by mediating attachment of telomeric DNA to the inner nuclear membrane and replacement of the protective cap of telomeric chromosomes: in early meiosis, the MAJIN-TERB1-TERB2 complex associates with telomeric DNA and the shelterin/telosome complex. During prophase, the complex matures and promotes release of the shelterin/telosome complex from telomeric DNA. In the complex, MAJIN acts as the anchoring subunit to the nucleus inner membrane. MAJIN shows DNA-binding activity, possibly for the stabilization of telomere attachment on the nucleus inner membrane. In Mus musculus (Mouse), this protein is Membrane-anchored junction protein.